Here is a 98-residue protein sequence, read N- to C-terminus: NADH-ubiquinone oxidoreductase chain 4L (98 aa).

3 helical membrane passes run Met-1–Met-21, Ser-29–Leu-49, and Leu-61–Ile-81.

Belongs to the complex I subunit 4L family. As to quaternary structure, core subunit of respiratory chain NADH dehydrogenase (Complex I) which is composed of 45 different subunits.

The protein resides in the mitochondrion inner membrane. The catalysed reaction is a ubiquinone + NADH + 5 H(+)(in) = a ubiquinol + NAD(+) + 4 H(+)(out). Core subunit of the mitochondrial membrane respiratory chain NADH dehydrogenase (Complex I) which catalyzes electron transfer from NADH through the respiratory chain, using ubiquinone as an electron acceptor. Part of the enzyme membrane arm which is embedded in the lipid bilayer and involved in proton translocation. The sequence is that of NADH-ubiquinone oxidoreductase chain 4L (MT-ND4L) from Mammuthus primigenius (Siberian woolly mammoth).